The chain runs to 512 residues: uncharacterized protein (512 aa).

Transmembrane regions (helical) follow at residues 20-40 (IFPVFMVMIIGLISFYAIYIW) and 222-242 (GIALLVVMGVVLILLVIFGYI). In terms of domain architecture, Histidine kinase spans 297–512 (EQLIQSIEQT…TLMCYQIPLV (216 aa)). H325 bears the Phosphohistidine; by autocatalysis mark.

Autophosphorylated.

Its subcellular location is the cell membrane. It catalyses the reaction ATP + protein L-histidine = ADP + protein N-phospho-L-histidine.. Probable member of the two-component regulatory system SE_0166/SE_0165. May activate SE_0165 by phosphorylation. This is an uncharacterized protein from Staphylococcus epidermidis (strain ATCC 12228 / FDA PCI 1200).